A 205-amino-acid chain; its full sequence is Thymidylate kinase (205 aa).

An ATP-binding site is contributed by 10-17 (GLEGAGKS).

It belongs to the thymidylate kinase family.

The enzyme catalyses dTMP + ATP = dTDP + ADP. Its function is as follows. Phosphorylation of dTMP to form dTDP in both de novo and salvage pathways of dTTP synthesis. This is Thymidylate kinase from Idiomarina loihiensis (strain ATCC BAA-735 / DSM 15497 / L2-TR).